The following is an 87-amino-acid chain: Cytochrome c oxidase assembly factor 4 homolog, mitochondrial (87 aa).

The span at 1–13 (MSTSVPQGHTWTQ) shows a compositional bias: polar residues. A disordered region spans residues 1-25 (MSTSVPQGHTWTQRVKKDDEEEDPL). The CHCH domain maps to 31–72 (RSGCAASHFAVQECMAQHQDWRQCQPQVQAFKDCMSEQQARR). Short sequence motifs (cx9C motif) lie at residues 34–44 (CAASHFAVQEC) and 54–64 (CQPQVQAFKDC). 2 cysteine pairs are disulfide-bonded: C34–C64 and C44–C54. The interval 68-87 (QQARRQEELQRRQEQAGAHH) is disordered. Positions 69–81 (QARRQEELQRRQE) are enriched in basic and acidic residues.

Belongs to the COA4 family.

Its subcellular location is the mitochondrion. Putative COX assembly factor. The sequence is that of Cytochrome c oxidase assembly factor 4 homolog, mitochondrial (COA4) from Homo sapiens (Human).